Reading from the N-terminus, the 340-residue chain is DNA polymerase III subunit delta' (340 aa).

In terms of assembly, the DNA polymerase holoenzyme is a complex that contains 10 different types of subunits. These subunits are organized into 3 functionally essential subassemblies: the pol III core, the beta sliding clamp processivity factor and the clamp-loading complex. The pol III core (subunits alpha,epsilon and theta) contains the polymerase and the 3'-5' exonuclease proofreading activities. The polymerase is tethered to the template via the sliding clamp processivity factor. The clamp-loading complex assembles the beta processivity factor onto the primer template and plays a central role in the organization and communication at the replication fork. This complex contains delta, delta', psi and chi, and copies of either or both of two different DnaX proteins, gamma and tau. The composition of the holoenzyme is, therefore: (alpha,epsilon,theta)[2]-(gamma/tau)[3]-delta,delta', psi,chi-beta[4].

The enzyme catalyses DNA(n) + a 2'-deoxyribonucleoside 5'-triphosphate = DNA(n+1) + diphosphate. Its function is as follows. DNA polymerase III is a complex, multichain enzyme responsible for most of the replicative synthesis in bacteria. This DNA polymerase also exhibits 3' to 5' exonuclease activity. This chain is DNA polymerase III subunit delta' (holB), found in Yersinia pestis.